A 147-amino-acid polypeptide reads, in one-letter code: Large ribosomal subunit protein uL13 (147 aa).

This sequence belongs to the universal ribosomal protein uL13 family. In terms of assembly, part of the 50S ribosomal subunit.

Functionally, this protein is one of the early assembly proteins of the 50S ribosomal subunit, although it is not seen to bind rRNA by itself. It is important during the early stages of 50S assembly. In Nocardia farcinica (strain IFM 10152), this protein is Large ribosomal subunit protein uL13.